Here is a 188-residue protein sequence, read N- to C-terminus: NADH-quinone oxidoreductase subunit I 2 (188 aa).

4Fe-4S ferredoxin-type domains lie at H56 to Y88 and A98 to Q127. Residues C68, C71, C74, C78, C107, C110, C113, and C117 each contribute to the [4Fe-4S] cluster site.

This sequence belongs to the complex I 23 kDa subunit family. As to quaternary structure, NDH-1 is composed of 14 different subunits. Subunits NuoA, H, J, K, L, M, N constitute the membrane sector of the complex. Requires [4Fe-4S] cluster as cofactor.

The protein resides in the cell inner membrane. The enzyme catalyses a quinone + NADH + 5 H(+)(in) = a quinol + NAD(+) + 4 H(+)(out). In terms of biological role, NDH-1 shuttles electrons from NADH, via FMN and iron-sulfur (Fe-S) centers, to quinones in the respiratory chain. The immediate electron acceptor for the enzyme in this species is believed to be ubiquinone. Couples the redox reaction to proton translocation (for every two electrons transferred, four hydrogen ions are translocated across the cytoplasmic membrane), and thus conserves the redox energy in a proton gradient. This chain is NADH-quinone oxidoreductase subunit I 2, found in Rhizobium etli (strain ATCC 51251 / DSM 11541 / JCM 21823 / NBRC 15573 / CFN 42).